The sequence spans 525 residues: GMP synthase [glutamine-hydrolyzing] (525 aa).

A Glutamine amidotransferase type-1 domain is found at 9–207 (RILILDFGSQ…VLEICGCAAL (199 aa)). Cysteine 86 functions as the Nucleophile in the catalytic mechanism. Catalysis depends on residues histidine 181 and glutamate 183. In terms of domain architecture, GMPS ATP-PPase spans 208–400 (WTPATIIEDA…LGLPYDMLYR (193 aa)). Residue 235–241 (SGGVDSS) coordinates ATP.

Homodimer.

The enzyme catalyses XMP + L-glutamine + ATP + H2O = GMP + L-glutamate + AMP + diphosphate + 2 H(+). Its pathway is purine metabolism; GMP biosynthesis; GMP from XMP (L-Gln route): step 1/1. Catalyzes the synthesis of GMP from XMP. The protein is GMP synthase [glutamine-hydrolyzing] of Edwardsiella ictaluri (strain 93-146).